A 34-amino-acid chain; its full sequence is Protein HRURF (34 aa).

May function as an inhibitory translational control element that can negatively regulate protein translation of HR gene. This chain is Protein HRURF, found in Homo sapiens (Human).